Reading from the N-terminus, the 224-residue chain is Thiamine-triphosphatase (224 aa).

At alanine 2 the chain carries N-acetylalanine. Positions 5–201 (LIEVERKFAP…AKLMVYLQRF (197 aa)) constitute a CYTH domain. Mg(2+)-binding residues include glutamate 7 and glutamate 9. Lysine 11, arginine 55, arginine 57, lysine 65, and arginine 125 together coordinate substrate. The Mg(2+) site is built by aspartate 145, glutamate 157, and glutamate 159. Position 157 (glutamate 157) interacts with substrate. Lysine 193 provides a ligand contact to substrate.

It belongs to the ThTPase family. As to quaternary structure, monomer. Requires Mg(2+) as cofactor.

The protein resides in the cytoplasm. It catalyses the reaction thiamine triphosphate + H2O = thiamine diphosphate + phosphate + H(+). Hydrolase highly specific for thiamine triphosphate (ThTP). This Mus musculus (Mouse) protein is Thiamine-triphosphatase (Thtpa).